We begin with the raw amino-acid sequence, 450 residues long: Divalent metal cation transporter MntH (450 aa).

The next 11 helical transmembrane spans lie at 44 to 64, 77 to 97, 121 to 141, 152 to 172, 181 to 201, 218 to 238, 273 to 293, 310 to 330, 366 to 386, 387 to 407, and 419 to 439; these read LLAFVGPGYLVSVGYMDPGNW, TLLSVILLSNLMAILLQSLAA, FLLWLACEAAIIACDLAEVIG, IPLIGGALIAALDAFLLLLLM, AFVIALLAVIAVCFAVQIVAA, IFTNPEMLYIAIGIIGATVMP, IALMLALFINAAILVVAAATF, LLSPLLGLGIASTLFAIALLA, GIAIIPVIIVTAIYGERGTAD, LLVFSQVVLSMQLPFAVIPLV, and FAISPYVAAIAWIVAGVIVVL.

It belongs to the NRAMP family.

It is found in the cell inner membrane. In terms of biological role, h(+)-stimulated, divalent metal cation uptake system. The protein is Divalent metal cation transporter MntH of Bradyrhizobium diazoefficiens (strain JCM 10833 / BCRC 13528 / IAM 13628 / NBRC 14792 / USDA 110).